Consider the following 169-residue polypeptide: Putative outer membrane protein BBA03 (169 aa).

Its subcellular location is the cell outer membrane. The protein is Putative outer membrane protein BBA03 of Borreliella burgdorferi (strain ATCC 35210 / DSM 4680 / CIP 102532 / B31) (Borrelia burgdorferi).